A 396-amino-acid chain; its full sequence is S-adenosylmethionine synthase (396 aa).

Residue histidine 16 participates in ATP binding. Mg(2+) is bound at residue aspartate 18. Glutamate 44 is a binding site for K(+). Residues glutamate 57 and glutamine 100 each contribute to the L-methionine site. Residues 100–110 are flexible loop; that stretch reads QSPDINQGVDR. Residues 165–167, 231–232, aspartate 240, 246–247, alanine 263, and lysine 267 contribute to the ATP site; these read DAK, KF, and RK. Residue aspartate 240 coordinates L-methionine. L-methionine is bound at residue lysine 271.

It belongs to the AdoMet synthase family. As to quaternary structure, homotetramer; dimer of dimers. Mg(2+) serves as cofactor. Requires K(+) as cofactor.

Its subcellular location is the cytoplasm. It catalyses the reaction L-methionine + ATP + H2O = S-adenosyl-L-methionine + phosphate + diphosphate. It participates in amino-acid biosynthesis; S-adenosyl-L-methionine biosynthesis; S-adenosyl-L-methionine from L-methionine: step 1/1. In terms of biological role, catalyzes the formation of S-adenosylmethionine (AdoMet) from methionine and ATP. The overall synthetic reaction is composed of two sequential steps, AdoMet formation and the subsequent tripolyphosphate hydrolysis which occurs prior to release of AdoMet from the enzyme. The protein is S-adenosylmethionine synthase of Ectopseudomonas mendocina (strain ymp) (Pseudomonas mendocina).